The chain runs to 531 residues: Fe-S cluster assembly factor HCF101, chloroplastic (531 aa).

The transit peptide at M1–R62 directs the protein to the chloroplast. Over residues A17 to P27 the composition is skewed to pro residues. The interval A17–A37 is disordered. Residues T28 to A37 are compositionally biased toward low complexity. An ATP-binding site is contributed by C181–S188.

This sequence belongs to the Mrp/NBP35 ATP-binding proteins family. The cofactor is [4Fe-4S] cluster.

The protein localises to the plastid. Its subcellular location is the chloroplast stroma. Required for photosystem I (PSI) biosynthesis and assembly. May serve as a chloroplast scaffold protein that specifically assembles iron-sulfur (4Fe-4S) clusters and transfers them to the chloroplast PSI and ferredoxin-thioredoxin (FTR) complexes. Probably not required for assembly or stability of plastidic 2Fe-2S clusters. This is Fe-S cluster assembly factor HCF101, chloroplastic (HCF101) from Oryza sativa subsp. japonica (Rice).